Here is a 68-residue protein sequence, read N- to C-terminus: Tabimmunregulin 12 (68 aa).

A signal peptide spans 1–24 (MLFKSYVYFLAGLLLVGLFTSCDA). A propeptide spanning residues 25 to 38 (DAQYEELVPGFFRK) is cleaved from the precursor.

In terms of tissue distribution, expressed in salivary glands.

The protein resides in the secreted. Its function is as follows. Horsefly salivary gland immunosuppressant protein that likely inhibits the host inflammatory response by regulation of anti- and pro-inflammatory cytokines. When tested on mouse splenocytes in the presence of LPS, it increases the secretion of the proinflammatory cytokine interleukin-10 (IL10) and decreases the secretion of the proinflammatory cytokine interferon-gamma (IFNG) in a dose-dependent manner. The chain is Tabimmunregulin 12 from Tabanus yao (Horsefly).